Here is a 301-residue protein sequence, read N- to C-terminus: Aspartate carbamoyltransferase catalytic subunit (301 aa).

Residues Arg-46 and Thr-47 each contribute to the carbamoyl phosphate site. Lys-74 lines the L-aspartate pocket. Carbamoyl phosphate is bound by residues Arg-96, His-124, and Gln-127. Residues Arg-157 and Arg-208 each coordinate L-aspartate. Residues Ala-249 and Pro-250 each contribute to the carbamoyl phosphate site.

Belongs to the aspartate/ornithine carbamoyltransferase superfamily. ATCase family. In terms of assembly, heterododecamer (2C3:3R2) of six catalytic PyrB chains organized as two trimers (C3), and six regulatory PyrI chains organized as three dimers (R2).

The enzyme catalyses carbamoyl phosphate + L-aspartate = N-carbamoyl-L-aspartate + phosphate + H(+). It participates in pyrimidine metabolism; UMP biosynthesis via de novo pathway; (S)-dihydroorotate from bicarbonate: step 2/3. In terms of biological role, catalyzes the condensation of carbamoyl phosphate and aspartate to form carbamoyl aspartate and inorganic phosphate, the committed step in the de novo pyrimidine nucleotide biosynthesis pathway. This is Aspartate carbamoyltransferase catalytic subunit from Bacillus cereus (strain ATCC 14579 / DSM 31 / CCUG 7414 / JCM 2152 / NBRC 15305 / NCIMB 9373 / NCTC 2599 / NRRL B-3711).